Here is a 323-residue protein sequence, read N- to C-terminus: Small ribosomal subunit protein uS9m (323 aa).

Residues 298-323 (TRDARKVERKKPGKVKARKSPTWVKR) form a disordered region. The span at 304-323 (VERKKPGKVKARKSPTWVKR) shows a compositional bias: basic residues.

This sequence belongs to the universal ribosomal protein uS9 family.

It is found in the mitochondrion. The sequence is that of Small ribosomal subunit protein uS9m (MRPS9) from Debaryomyces hansenii (strain ATCC 36239 / CBS 767 / BCRC 21394 / JCM 1990 / NBRC 0083 / IGC 2968) (Yeast).